A 109-amino-acid chain; its full sequence is Small ribosomal subunit protein uS17 (109 aa).

It belongs to the universal ribosomal protein uS17 family. As to quaternary structure, part of the 30S ribosomal subunit.

In terms of biological role, one of the primary rRNA binding proteins, it binds specifically to the 5'-end of 16S ribosomal RNA. The protein is Small ribosomal subunit protein uS17 of Methanococcoides burtonii (strain DSM 6242 / NBRC 107633 / OCM 468 / ACE-M).